The following is an 83-amino-acid chain: MPRKEKIGLVVSDAMQKTVVVAVENRVPHPKYKKIVVRTRKFKAHDEENRCKVGDRVRILESPPLSKTKRWVVLDILDEARNP.

It belongs to the universal ribosomal protein uS17 family. Part of the 30S ribosomal subunit.

In terms of biological role, one of the primary rRNA binding proteins, it binds specifically to the 5'-end of 16S ribosomal RNA. The protein is Small ribosomal subunit protein uS17 of Gloeobacter violaceus (strain ATCC 29082 / PCC 7421).